Here is a 201-residue protein sequence, read N- to C-terminus: LIM domain-containing protein PLIM2b (201 aa).

LIM zinc-binding domains lie at 8–68 (DKCT…LFKE) and 103–163 (DKCA…LFME). The segment at 171-201 (KKKSESQEVLPEVVPEEQPAPPPPDENREDN) is disordered. Positions 177–187 (QEVLPEVVPEE) are enriched in low complexity.

Interacts with NEK3.

The chain is LIM domain-containing protein PLIM2b from Oryza sativa subsp. japonica (Rice).